The following is a 139-amino-acid chain: NADPH-dependent 7-cyano-7-deazaguanine reductase (139 aa).

Cys34 functions as the Thioimide intermediate in the catalytic mechanism. Asp41 serves as the catalytic Proton donor. Residues 56 to 58 and 75 to 76 contribute to the substrate site; these read IEL and HE.

The protein belongs to the GTP cyclohydrolase I family. QueF type 1 subfamily.

It localises to the cytoplasm. It carries out the reaction 7-aminomethyl-7-carbaguanine + 2 NADP(+) = 7-cyano-7-deazaguanine + 2 NADPH + 3 H(+). It functions in the pathway tRNA modification; tRNA-queuosine biosynthesis. Its function is as follows. Catalyzes the NADPH-dependent reduction of 7-cyano-7-deazaguanine (preQ0) to 7-aminomethyl-7-deazaguanine (preQ1). The polypeptide is NADPH-dependent 7-cyano-7-deazaguanine reductase (Nitrosomonas eutropha (strain DSM 101675 / C91 / Nm57)).